The chain runs to 111 residues: Universal stress protein B (111 aa).

2 helical membrane-spanning segments follow: residues 1 to 21 (MIST…NMAR) and 90 to 110 (FILT…LAIW).

This sequence belongs to the universal stress protein B family.

The protein localises to the cell inner membrane. In Erwinia tasmaniensis (strain DSM 17950 / CFBP 7177 / CIP 109463 / NCPPB 4357 / Et1/99), this protein is Universal stress protein B.